Here is a 461-residue protein sequence, read N- to C-terminus: Phosphatidate cytidylyltransferase 1 (461 aa).

The segment at 1–68 is disordered; the sequence is MLELRHRGGC…PEVPPSSDRT (68 aa). The residue at position 7 (R7) is an Omega-N-methylarginine. The segment covering 22–56 has biased composition (basic and acidic residues); that stretch reads REGEAAGGDHETESTSDKETDIDDRYGDLDARGDS. A phosphoserine mark is found at S35 and S37. The next 6 membrane-spanning stretches (helical) occupy residues 96 to 116, 149 to 169, 183 to 203, 230 to 250, 279 to 299, and 357 to 377; these read MISLFFLIIYMGSFMLMLLVL, FLLCVNYFFYGETVADYFATF, HRFISFALYLAGFCMFVLSLV, LVIQNLFEGMIWFLVPISSVI, GFIGGFFSTVIFGFIAAYVLS, and IALSTFASLIGPFGGFFASGF.

The protein belongs to the CDS family. In terms of assembly, homodimer. Interacts with FOS; this interaction may enhance catalytic activity. It depends on Mg(2+) as a cofactor. Expressed in adult brain, eye, smooth muscle and testis. Highly expressed in the inner segment of the photoreceptor layer of adult retina.

It is found in the endoplasmic reticulum membrane. It catalyses the reaction a 1,2-diacyl-sn-glycero-3-phosphate + CTP + H(+) = a CDP-1,2-diacyl-sn-glycerol + diphosphate. The enzyme catalyses 1-octadecanoyl-2-(5Z,8Z,11Z,14Z-eicosatetraenoyl)-sn-glycero-3-phosphate + CTP + H(+) = 1-octadecanoyl-2-(5Z,8Z,11Z,14Z-eicosatetraenoyl)-sn-glycero-3-cytidine-5'-diphosphate + diphosphate. It carries out the reaction 1-octadecanoyl-2-(9Z,12Z-octadecadienoyl)-sn-glycero-3-phosphate + CTP + H(+) = 1-octadecanoyl-2-(9Z,12Z-octadecadienoyl)-sn-glycero-3-cytidine-5'-diphosphate + diphosphate. The catalysed reaction is 1-hexadecanoyl-2-(5Z,8Z,11Z,14Z-eicosatetraenoyl)-sn-glycero-3-phosphate + CTP + H(+) = 1-hexadecanoyl-2-(5Z,8Z,11Z,14Z-eicosatetraenoyl)-sn-glycero-3-cytidine-5'-diphosphate + diphosphate. It catalyses the reaction 1,2-di-(5Z,8Z,11Z,14Z)-eicosatetraenoyl-sn-glycero-3-phosphate + CTP + H(+) = 1,2-di-(5Z,8Z,11Z,14Z-eicosatetraenoyl)-sn-glycero-3-cytidine-5'-diphosphate + diphosphate. The enzyme catalyses 1-octadecanoyl-2-(9Z-octadecenoyl)-sn-glycero-3-phosphate + CTP + H(+) = 1-octadecanoyl-2-(9Z-octadecenoyl)-sn-glycero-3-cytidine-5'-diphosphate + diphosphate. It carries out the reaction 1-octadecanoyl-2-(4Z,7Z,10Z,13Z,16Z,19Z-docosahexaenoyl)-sn-glycero-3-phosphate + CTP + H(+) = 1-octadecanoyl-2-(4Z,7Z,10Z,13Z,16Z,19Z-docosahexaenoyl)-sn-glycero-3-cytidine-5'-diphosphate + diphosphate. The catalysed reaction is 1,2-di-(9Z,12Z-octadecadienoyl)-sn-glycero-3-phosphate + CTP + H(+) = 1,2-di-(9Z,12Z-octadecadienoyl)-sn-glycero-3-cytidine-5'-diphosphate + diphosphate. It catalyses the reaction 1,2-di-(9Z-octadecenoyl)-sn-glycero-3-phosphate + CTP + H(+) = 1,2-di-(9Z-octadecenoyl)-sn-glycero-3-cytidine-5'-diphosphate + diphosphate. Its pathway is phospholipid metabolism; CDP-diacylglycerol biosynthesis; CDP-diacylglycerol from sn-glycerol 3-phosphate: step 3/3. Catalyzes the conversion of phosphatidic acid (PA) to CDP-diacylglycerol (CDP-DAG), an essential intermediate in the synthesis of phosphatidylglycerol, cardiolipin and phosphatidylinositol. Exhibits almost no acyl chain preference for PA, showing no discrimination for the sn-1/sn-2 acyl chain composition of PAs. Plays an important role in regulating the growth of lipid droplets which are storage organelles at the center of lipid and energy homeostasis. Positively regulates the differentiation and development of adipocytes. This Mus musculus (Mouse) protein is Phosphatidate cytidylyltransferase 1.